We begin with the raw amino-acid sequence, 163 residues long: Probable chemoreceptor glutamine deamidase CheD (163 aa).

Belongs to the CheD family.

The catalysed reaction is L-glutaminyl-[protein] + H2O = L-glutamyl-[protein] + NH4(+). In terms of biological role, probably deamidates glutamine residues to glutamate on methyl-accepting chemotaxis receptors (MCPs), playing an important role in chemotaxis. The protein is Probable chemoreceptor glutamine deamidase CheD of Borrelia garinii subsp. bavariensis (strain ATCC BAA-2496 / DSM 23469 / PBi) (Borreliella bavariensis).